Reading from the N-terminus, the 476-residue chain is Aspartyl/glutamyl-tRNA(Asn/Gln) amidotransferase subunit B (476 aa).

It belongs to the GatB/GatE family. GatB subfamily. Heterotrimer of A, B and C subunits.

The enzyme catalyses L-glutamyl-tRNA(Gln) + L-glutamine + ATP + H2O = L-glutaminyl-tRNA(Gln) + L-glutamate + ADP + phosphate + H(+). The catalysed reaction is L-aspartyl-tRNA(Asn) + L-glutamine + ATP + H2O = L-asparaginyl-tRNA(Asn) + L-glutamate + ADP + phosphate + 2 H(+). Its function is as follows. Allows the formation of correctly charged Asn-tRNA(Asn) or Gln-tRNA(Gln) through the transamidation of misacylated Asp-tRNA(Asn) or Glu-tRNA(Gln) in organisms which lack either or both of asparaginyl-tRNA or glutaminyl-tRNA synthetases. The reaction takes place in the presence of glutamine and ATP through an activated phospho-Asp-tRNA(Asn) or phospho-Glu-tRNA(Gln). This Listeria monocytogenes serovar 1/2a (strain ATCC BAA-679 / EGD-e) protein is Aspartyl/glutamyl-tRNA(Asn/Gln) amidotransferase subunit B.